Here is a 313-residue protein sequence, read N- to C-terminus: Glutathionyl-hydroquinone reductase PcpF (313 aa).

Cys-53 (nucleophile) is an active-site residue. Glutathione-binding positions include Trp-86, 119-122, and 137-138; these read RVTI and ES. The region spanning 161 to 285 is the GST C-terminal domain; that stretch reads PAEFRPEIDR…INLRHAKAHY (125 aa). The active-site Proton donor/acceptor is Tyr-184.

Belongs to the GST superfamily. Xi-class GSH transferase family. In terms of assembly, homodimer.

It catalyses the reaction 2-(glutathione-S-yl)-hydroquinone + glutathione = hydroquinone + glutathione disulfide. Catalyzes glutathione (GSH)-dependent reduction of glutathionyl-hydroquinones (GS-HQs) to the corresponding hydroquinones. Can act on halogenated substrates such as GS-2,6-dichloro-p-hydroquinone (GS-DiCH) and GS-trichloro-p-hydroquinone (GS-TriCH). Involved in the degradation of pentachlorophenol (PCP), a toxic pollutant. This chain is Glutathionyl-hydroquinone reductase PcpF, found in Sphingobium chlorophenolicum.